Here is a 367-residue protein sequence, read N- to C-terminus: MEGFDHVTFWVGNALQAATYYIARFGFQNLAYSGLETGNRQFATHVIHQNNIIMAFTSPLTGDNKDYADHMMRHGDGVKDIAFNVKDVQHIYDEAVKAGAQSVKEPHQIKDEHGIVTLATIMSPYGETTHTFVDRSQYKGAFLPGFTYKVASDPLSNITEPVGLNLIDHVVSNHADKMMEPVVQWYEKVLQFHRFWSVDDKTIHTEYSSLRSVVVADKSEKVKLPINEPANGIRKSQIQEYVDFYNGAGVQHIALKTDNIIDAISKLRSRGVSFLTVPKTYYTSLREKLQHSSLEIKEDLDTLEKLHILIDYDDKGYLLQIFTNNVEDKPTVFFEIIQRNNHDGFGAGNFKSLFEAIERQQETRGNL.

VOC domains are found at residues G3 to R135 and L166 to N324. Positions 169, 252, and 335 each coordinate Fe cation.

This sequence belongs to the 4HPPD family. Fe cation serves as cofactor.

It catalyses the reaction 3-(4-hydroxyphenyl)pyruvate + O2 = homogentisate + CO2. It participates in amino-acid degradation; L-phenylalanine degradation; acetoacetate and fumarate from L-phenylalanine: step 3/6. In terms of biological role, key enzyme in the degradation of tyrosine. The chain is 4-hydroxyphenylpyruvate dioxygenase (hpd) from Dictyostelium discoideum (Social amoeba).